A 541-amino-acid chain; its full sequence is Neutral amino acid transporter B(0) (541 aa).

Met1 is modified (N-acetylmethionine). Residues 1–10 (MVADPPKGDP) are compositionally biased toward basic and acidic residues. The interval 1–32 (MVADPPKGDPKGLAAVEPTANGAPAQDPLEDS) is disordered. Over 1 to 52 (MVADPPKGDPKGLAAVEPTANGAPAQDPLEDSGAAVGRCCSSRDQVRRCLRA) the chain is Cytoplasmic. The chain crosses the membrane as a helical span at residues 53 to 82 (NLLVLLTVVAVVAGVALGLAVSGAGGALAL). The Extracellular segment spans residues 83-95 (GPARLIAFAFPGE). Residues 96–117 (LLLRLLKMIILPLVVCSLVGGA) form a helical membrane-spanning segment. At 118-131 (ASLDPSALGRLGAW) the chain is on the cytoplasmic side. A helical transmembrane segment spans residues 132-154 (ALLFFLVTTLLASALGVGLALAL). The Extracellular portion of the chain corresponds to 155 to 225 (QPGAAFAAMN…GTLVKVPVAH (71 aa)). N-linked (GlcNAc...) asparagine glycosylation is found at Asn164 and Asn215. Residues 226 to 249 (EEEGMNILGLVVFAIVFGVALRKL) form a helical membrane-spanning segment. The Cytoplasmic segment spans residues 250 to 258 (GPEGEPLIR). Residues 259–286 (FFNSFNDATMVLVSWIMWYAPVGILFLV) traverse the membrane as a helical segment. At 287–307 (ASKIVEMDDVGVLFASLGKYI) the chain is on the extracellular side. The chain crosses the membrane as a helical span at residues 308-329 (LCCLLGHAIHGLLVLPLIYFLF). Over 330 to 334 (TRKNP) the chain is Cytoplasmic. Positions 335-365 (YRFLWGILTPLAMAFGTSSSSATLPLMMKCV) form an intramembrane region, discontinuously helical. At 366–374 (EERNGVAKH) the chain is on the cytoplasmic side. A helical transmembrane segment spans residues 375-401 (ISRFVLPIGATVNMDGAALFQCVAAVF). Na(+) is bound by residues Gly383, Thr385, and Asn387. Residues 402–414 (IAQLNRQSLDFVK) are Extracellular-facing. The segment at residues 415 to 448 (IITILVTATASSVGAAGIPAGGVLTLAIILEAVS) is an intramembrane region (discontinuously helical). Residues 449 to 461 (LPVSEISLILAVD) lie on the Extracellular side of the membrane. The helical transmembrane segment at 462 to 483 (WLVDRSCTIINVEGDAFGAGLL) threads the bilayer. Na(+)-binding residues include Asn472 and Asp476. The Cytoplasmic segment spans residues 484 to 541 (QHYVDRTEQRGSEPELTQVKSEVPLGSLPAPNEEGNPLLRHSPGAAGDAGACEKESVM). The disordered stretch occupies residues 493-541 (RGSEPELTQVKSEVPLGSLPAPNEEGNPLLRHSPGAAGDAGACEKESVM). Residues Ser495, Ser504, and Ser539 each carry the phosphoserine modification.

It belongs to the dicarboxylate/amino acid:cation symporter (DAACS) (TC 2.A.23) family. SLC1A5 subfamily. As to quaternary structure, homotrimer.

The protein resides in the cell membrane. It is found in the melanosome. It catalyses the reaction L-glutamine(out) + L-serine(in) + Na(+)(out) = L-glutamine(in) + L-serine(out) + Na(+)(in). The enzyme catalyses L-glutamine(in) + L-serine(out) + Na(+)(out) = L-glutamine(out) + L-serine(in) + Na(+)(in). The catalysed reaction is L-threonine(in) + L-glutamine(out) + Na(+)(out) = L-threonine(out) + L-glutamine(in) + Na(+)(in). It carries out the reaction L-threonine(out) + L-glutamine(in) + Na(+)(out) = L-threonine(in) + L-glutamine(out) + Na(+)(in). It catalyses the reaction L-asparagine(in) + L-glutamine(out) + Na(+)(out) = L-asparagine(out) + L-glutamine(in) + Na(+)(in). The enzyme catalyses L-asparagine(out) + L-glutamine(in) + Na(+)(out) = L-asparagine(in) + L-glutamine(out) + Na(+)(in). The catalysed reaction is L-glutamine(in) + L-alanine(out) + Na(+)(out) = L-glutamine(out) + L-alanine(in) + Na(+)(in). It carries out the reaction L-valine(out) + L-glutamine(in) + Na(+)(out) = L-valine(in) + L-glutamine(out) + Na(+)(in). It catalyses the reaction L-glutamine(in) + L-methionine(out) + Na(+)(out) = L-glutamine(out) + L-methionine(in) + Na(+)(in). The enzyme catalyses L-glutamine(in) + L-glutamate(out) + Na(+)(out) + H(+)(out) = L-glutamine(out) + L-glutamate(in) + Na(+)(in) + H(+)(in). The catalysed reaction is D-serine(in) + L-glutamine(out) + Na(+)(out) = D-serine(out) + L-glutamine(in) + Na(+)(in). It carries out the reaction D-serine(in) + L-alanine(out) + Na(+)(out) = D-serine(out) + L-alanine(in) + Na(+)(in). It catalyses the reaction nitrate(in) = nitrate(out). The enzyme catalyses iodide(out) = iodide(in). The catalysed reaction is thiocyanate(in) = thiocyanate(out). Sodium-coupled antiporter of neutral amino acids. In a tri-substrate transport cycle, exchanges neutral amino acids between the extracellular and intracellular compartments, coupled to the inward cotransport of at least one sodium ion. The preferred substrate is the essential amino acid L-glutamine, a precursor for biosynthesis of proteins, nucleotides and amine sugars as well as an alternative fuel for mitochondrial oxidative phosphorylation. Exchanges L-glutamine with other neutral amino acids such as L-serine, L-threonine and L-asparagine in a bidirectional way. Provides L-glutamine to proliferating stem and activated cells driving the metabolic switch toward cell differentiation. The transport cycle is usually pH-independent, with the exception of L-glutamate. Transports extracellular L-glutamate coupled to the cotransport of one proton and one sodium ion in exchange for intracellular L-glutamine counter-ion. May provide for L-glutamate uptake in glial cells regulating glutamine/glutamate cycle in the nervous system. Can transport D-amino acids. Mediates D-serine release from the retinal glia potentially affecting NMDA receptor function in retinal neurons. Displays sodium- and amino acid-dependent but uncoupled channel-like anion conductance with a preference SCN(-) &gt;&gt; NO3(-) &gt; I(-) &gt; Cl(-). Through binding of the fusogenic protein syncytin-1/ERVW-1 may mediate trophoblasts syncytialization, the spontaneous fusion of their plasma membranes, an essential process in placental development. The chain is Neutral amino acid transporter B(0) (SLC1A5) from Oryctolagus cuniculus (Rabbit).